Reading from the N-terminus, the 518-residue chain is Motile sperm domain-containing protein 2 (518 aa).

Residues 1 to 496 (MAENNAQNKA…QLQRSIWFQQ (496 aa)) lie on the Cytoplasmic side of the membrane. In terms of domain architecture, CRAL-TRIO spans 85–239 (IPRWLLELGG…HMGGTDPFKY (155 aa)). Residues 252-312 (PLCENGPIAS…KDENEKVDSK (61 aa)) form a disordered region. 2 stretches are compositionally biased toward basic and acidic residues: residues 265 to 279 (TSSKEDIEGDGKETL) and 300 to 312 (VSKKDENEKVDSK). The MSP domain maps to 327–445 (LLHISPAEEL…MEHRLRCHTV (119 aa)). The required for FFAT motif binding and phosphorylated FFAT motif binding stretch occupies residues 365–366 (RT). A helical; Anchor for type IV membrane protein membrane pass occupies residues 497–518 (LLLALTMVLLDFVVSFFYSLYN).

Homooligomer. Interacts (via MSP domain) with STARD3NL (via FFAT motif), RMDN3 (via FFAT motif), OSBPL1A (via FFAT motif) and CERT1 (via FFAT motif). Interacts (via MSP domain) with STARD3 (via phosphorylated FFAT motif); this interaction depends on the critical phosphorylation of STARD3 on 'Ser-209'. Interacts with RB1CC1 (via phosphorylated FFAT motif), MIGA2 (via phosphorylated FFAT motif) and OSBPL1A (via FFAT motif).

Its subcellular location is the endoplasmic reticulum membrane. Endoplasmic reticulum-anchored protein that mediates the formation of contact sites between the endoplasmic (ER) and endosomes, mitochondria or Golgi through interaction with conventional- and phosphorylated-FFAT-containing organelle-bound proteins. In addition, forms endoplasmic reticulum (ER)-lipid droplets (LDs) contacts through a direct protein-membrane interaction and participates in LDs homeostasis. The attachment mechanism involves an amphipathic helix that has an affinity for lipid packing defects present at the surface of LDs. Promotes migration of primary monocytes and neutrophils, in response to various chemokines. This Mus musculus (Mouse) protein is Motile sperm domain-containing protein 2.